A 331-amino-acid chain; its full sequence is Ketol-acid reductoisomerase (NADP(+)) (331 aa).

Residues 2–182 (AKMYYDKDAD…GGTRAGVIET (181 aa)) enclose the KARI N-terminal Rossmann domain. NADP(+) contacts are provided by residues 25-28 (FGSQ), Ser-51, Ser-53, and 83-86 (DEKQ). His-108 is an active-site residue. Gly-134 is an NADP(+) binding site. Residues 183–328 (TFKEETETDL…KGLREMMAWI (146 aa)) form the KARI C-terminal knotted domain. Asp-191, Glu-195, Glu-227, and Glu-231 together coordinate Mg(2+). A substrate-binding site is contributed by Ser-252.

Belongs to the ketol-acid reductoisomerase family. Mg(2+) is required as a cofactor.

The enzyme catalyses (2R)-2,3-dihydroxy-3-methylbutanoate + NADP(+) = (2S)-2-acetolactate + NADPH + H(+). It catalyses the reaction (2R,3R)-2,3-dihydroxy-3-methylpentanoate + NADP(+) = (S)-2-ethyl-2-hydroxy-3-oxobutanoate + NADPH + H(+). It participates in amino-acid biosynthesis; L-isoleucine biosynthesis; L-isoleucine from 2-oxobutanoate: step 2/4. It functions in the pathway amino-acid biosynthesis; L-valine biosynthesis; L-valine from pyruvate: step 2/4. Functionally, involved in the biosynthesis of branched-chain amino acids (BCAA). Catalyzes an alkyl-migration followed by a ketol-acid reduction of (S)-2-acetolactate (S2AL) to yield (R)-2,3-dihydroxy-isovalerate. In the isomerase reaction, S2AL is rearranged via a Mg-dependent methyl migration to produce 3-hydroxy-3-methyl-2-ketobutyrate (HMKB). In the reductase reaction, this 2-ketoacid undergoes a metal-dependent reduction by NADPH to yield (R)-2,3-dihydroxy-isovalerate. This is Ketol-acid reductoisomerase (NADP(+)) from Thermoanaerobacter pseudethanolicus (strain ATCC 33223 / 39E) (Clostridium thermohydrosulfuricum).